The chain runs to 409 residues: Elongation factor Tu, chloroplastic (409 aa).

The region spanning 10 to 214 is the tr-type G domain; that stretch reads KQHVNIGTIG…NVDTYIPTPV (205 aa). The interval 19–26 is G1; the sequence is GHVDHGKT. 19 to 26 contacts GTP; it reads GHVDHGKT. Threonine 26 contributes to the Mg(2+) binding site. The segment at 60–64 is G2; that stretch reads GITIN. Residues 81 to 84 form a G3 region; it reads DCPG. GTP contacts are provided by residues 81–85 and 136–139; these read DCPGH and NKED. The segment at 136–139 is G4; that stretch reads NKED. Residues 174-176 are G5; that stretch reads SAL.

This sequence belongs to the TRAFAC class translation factor GTPase superfamily. Classic translation factor GTPase family. EF-Tu/EF-1A subfamily.

It localises to the plastid. The protein localises to the chloroplast. It catalyses the reaction GTP + H2O = GDP + phosphate + H(+). Functionally, GTP hydrolase that promotes the GTP-dependent binding of aminoacyl-tRNA to the A-site of ribosomes during protein biosynthesis. This is Elongation factor Tu, chloroplastic (tufA) from Tupiella akineta (Green alga).